The following is a 1078-amino-acid chain: Rho family-interacting cell polarization regulator 2 (1078 aa).

Residues Ser46 and Ser62 each carry the phosphoserine modification. Residues 80 to 138 (MHNLGHKNNNTPKEPQPKRVEEVYRALKNGLDEYLEFHQTELDKLTAQLKDMKRNSRLG) form an involved in cell filopodia formation region. Residues 108 to 137 (NGLDEYLEFHQTELDKLTAQLKDMKRNSRL) are a coiled coil. Phosphoserine is present on Ser366. Over residues 488 to 508 (SSLSSQNEGTEDSSSASSRNS) the composition is skewed to polar residues. The tract at residues 488 to 534 (SSLSSQNEGTEDSSSASSRNSLGEDHEPKSHPKSDTVEPGKPGVATR) is disordered. The span at 509 to 525 (LGEDHEPKSHPKSDTVE) shows a compositional bias: basic and acidic residues. Ser582 carries the post-translational modification Phosphoserine.

The protein belongs to the RIPOR family. Homooligomer; homooligomerization is regulated by RHOC and leads to the formation of concatemers through the association of N- and C-termini. Interacts (phosphorylated form) with 14-3-3 proteins; these interactions occur during myogenic cell differentiation and also induces T cell proliferation arrest. Interacts (phosphorylated form) with HDAC6; this interaction occurs during early myogenic differentiation, prevents HDAC6 to deacetylate tubulin and also induces T cell proliferation arrest. Interacts with DYSF; this interaction occurs during early myogenic differentiation. Interacts with MYOF. Interacts (via active GTP- or inactive GDP-bound forms) with RHOA; this interaction is direct, blocks the loading of GTP to RHOA and decreases upon chemokine CCL19 stimulation in primary T lymphocytes. Interacts with RHOC. Interacts (via phosphorylated form) with YWHAB; this interaction occurs in a chemokine-dependent manner and does not compete for binding of RIPOR2 with RHOA nor blocks inhibition of RIPOR2-mediated RHOA activity. Interacts with YWHAE. Interacts with YWHAQ. Phosphorylated. Chemokine-induced phosphorylation in neutrophils occurs in a PKC- and AKT-dependent manner, resulting in RIPOR2 interaction with YWHAB and stabilization. Phosphorylated by PKCA, AKT1 and MAPKAPK1A; in vitro. As to expression, expressed in the cochlea. Expressed in inner hair cells and outer hair cells and Hensen's cells (at protein level). Expressed in the brain, cerebellum, spinal cord, retina, heart, spleen liver, kidney, bladder, muscle and lung. Expressed in the cochlea of the inner ear.

It localises to the cytoplasm. It is found in the cytoskeleton. The protein localises to the cell projection. The protein resides in the filopodium. Its subcellular location is the stereocilium. It localises to the stereocilium membrane. It is found in the apical cell membrane. Functionally, acts as an inhibitor of the small GTPase RHOA and plays several roles in the regulation of myoblast and hair cell differentiation, lymphocyte T proliferation and neutrophil polarization. Plays a role in fetal mononuclear myoblast differentiation by promoting filopodia and myotube formation. Maintains naive T lymphocytes in a quiescent state and prevents chemokine-induced T lymphocyte responses, such as cell adhesion, polarization and migration. Involved also in the regulation of neutrophil polarization, chemotaxis and adhesion. Required for normal development of inner and outer hair cell stereocilia within the cochlea of the inner ear. Plays a role for maintaining the structural organization of the basal domain of stereocilia. Involved in mechanosensory hair cell function. Required for normal hearing. The sequence is that of Rho family-interacting cell polarization regulator 2 from Mus musculus (Mouse).